The primary structure comprises 709 residues: Nucleobase-ascorbate transporter 11 (709 aa).

Disordered stretches follow at residues 1 to 28 (MDSGSGFDPDTGNNKGNGSGGGNGYGER) and 58 to 167 (TGFV…SEDG). The span at 15 to 25 (KGNGSGGGNGY) shows a compositional bias: gly residues. Residues 65–74 (SGETSTSTRT) are compositionally biased toward polar residues. 3 stretches are compositionally biased toward basic and acidic residues: residues 75–89 (KFGESSDFDLPKGRD), 108–132 (NRPEIEHVTGSEPVSREEEERRLNR), and 142–151 (EGGKINKDLE). Helical transmembrane passes span 196 to 216 (YLSLVGSLVFIPLVIVPAMDG), 222 to 242 (ASVISTMLLLTGVTTILHCYF), 246 to 266 (LPLVQGSSFVYLAPVLVVINS), 288 to 308 (IIVGSLFQCILGFSGLMSLLL), 310 to 330 (FINPVVVAPTVAAVGLAFFSY), 336 to 356 (GTCVEISVPLILLLLIFTLYL), 369 to 389 (IYAVPLSALLIWTYAFFLTVG), 454 to 474 (IIMIFVSLVASVDSVGTYHSA), 532 to 552 (LVIGAMFLIVLSFLGKLGAIL), 555 to 575 (IPQALAASVLCFIWALTVSLG), 590 to 610 (ITIVGVSLFLGLSIPAYFQQY), and 642 to 662 (FAMNAVLSLNMVVTFLLAFIL).

This sequence belongs to the nucleobase:cation symporter-2 (NCS2) (TC 2.A.40) family. In terms of tissue distribution, expressed in leaf primordia and vasculature of pedicels, rosette leaves, sepals, carpels and siliques. Expressed in the root central cylinder.

It localises to the membrane. The chain is Nucleobase-ascorbate transporter 11 (NAT11) from Arabidopsis thaliana (Mouse-ear cress).